The sequence spans 50 residues: MSLYLLLGLKILRYLKMVIVLRCHSAFLLSVKFLREKRRLKMYLGIMLGF.

This is an uncharacterized protein from Dryophytes versicolor (chameleon treefrog).